The chain runs to 88 residues: Putative sulfur carrier protein AF_0554 (88 aa).

The Cysteine persulfide intermediate role is filled by C26.

Belongs to the sulfur carrier protein TusA family.

In Archaeoglobus fulgidus (strain ATCC 49558 / DSM 4304 / JCM 9628 / NBRC 100126 / VC-16), this protein is Putative sulfur carrier protein AF_0554.